Consider the following 390-residue polypeptide: Precorrin-6Y C(5,15)-methyltransferase [decarboxylating] (390 aa).

This sequence belongs to the precorrin methyltransferase family.

The catalysed reaction is precorrin-6B + 2 S-adenosyl-L-methionine = precorrin-8X + 2 S-adenosyl-L-homocysteine + CO2 + 3 H(+). The protein operates within cofactor biosynthesis; adenosylcobalamin biosynthesis; cob(II)yrinate a,c-diamide from precorrin-2 (aerobic route): step 7/10. Functionally, catalyzes the methylation of both C-5 and C-15 in precorrin-6Y to form precorrin-8X. The chain is Precorrin-6Y C(5,15)-methyltransferase [decarboxylating] (cobL) from Mycobacterium tuberculosis (strain ATCC 25618 / H37Rv).